A 266-amino-acid chain; its full sequence is Small ribosomal subunit protein eS1 (266 aa).

Residues 237–266 (DGGSKTGEVGETGSKVDRPEGYEPPVQETV) form a disordered region.

This sequence belongs to the eukaryotic ribosomal protein eS1 family. As to quaternary structure, component of the small ribosomal subunit. Mature ribosomes consist of a small (40S) and a large (60S) subunit. The 40S subunit contains about 33 different proteins and 1 molecule of RNA (18S). The 60S subunit contains about 49 different proteins and 3 molecules of RNA (28S, 5.8S and 5S).

Its subcellular location is the cytoplasm. This Lysiphlebus testaceipes (Greenbugs aphid parastoid) protein is Small ribosomal subunit protein eS1.